Consider the following 453-residue polypeptide: MKSLKSSTHDVPHPEHVVWAPPAYDEQHHLFFSHGTVLIGIVGSLIITVAVVGNVLVCLAIFTEPILSHSKSNFFIVSLAVADLLLALLVMTFALVNDMYGYWLFGETFCFIWMSADVMCETASIFSICVISYDRLKQVQKPLHYEEFMTTTRALLIIACLWICSFVLSFVPIFLEWHELSVEEIKAIFKDNKTEKEKALEAHNFSSALNQTLGDNQKSNAKHVCLFDVHFTYSVIYSFICFYVPCTLMLTNYLRLFLIAQTHQVRIRSLQMTNPPQLRGQGASSYRNQGTQGSKAARTLTIITGTFLACWLPFFIINPIAAADEHLIPLECFMVTIWLGYFNSSVNPIIYGTSNSKFRAAFKRLLRCRSVKSVVGSISPVSPAYRAFSWIRPSRLDLSSSEHPSDACDTGRGKNSKGGDCATADPTKPDVSVSEEIIYAGTKVFDSDTAFSS.

The Extracellular portion of the chain corresponds to 1-36 (MKSLKSSTHDVPHPEHVVWAPPAYDEQHHLFFSHGT). The chain crosses the membrane as a helical span at residues 37-57 (VLIGIVGSLIITVAVVGNVLV). The Cytoplasmic segment spans residues 58-74 (CLAIFTEPILSHSKSNF). A helical membrane pass occupies residues 75–94 (FIVSLAVADLLLALLVMTFA). Over 95–110 (LVNDMYGYWLFGETFC) the chain is Extracellular. A disulfide bond links Cys-110 and Cys-225. Residues 111 to 133 (FIWMSADVMCETASIFSICVISY) traverse the membrane as a helical segment. At 134 to 153 (DRLKQVQKPLHYEEFMTTTR) the chain is on the cytoplasmic side. The helical transmembrane segment at 154–175 (ALLIIACLWICSFVLSFVPIFL) threads the bilayer. Topologically, residues 176-223 (EWHELSVEEIKAIFKDNKTEKEKALEAHNFSSALNQTLGDNQKSNAKH) are extracellular. The chain crosses the membrane as a helical span at residues 224-244 (VCLFDVHFTYSVIYSFICFYV). Over 245-301 (PCTLMLTNYLRLFLIAQTHQVRIRSLQMTNPPQLRGQGASSYRNQGTQGSKAARTLT) the chain is Cytoplasmic. The helical transmembrane segment at 302–322 (IITGTFLACWLPFFIINPIAA) threads the bilayer. The Extracellular segment spans residues 323-331 (ADEHLIPLE). A helical membrane pass occupies residues 332 to 352 (CFMVTIWLGYFNSSVNPIIYG). Residues 353–453 (TSNSKFRAAF…VFDSDTAFSS (101 aa)) are Cytoplasmic-facing. Residues 397-428 (DLSSSEHPSDACDTGRGKNSKGGDCATADPTK) form a disordered region. The segment covering 403–412 (HPSDACDTGR) has biased composition (basic and acidic residues).

This sequence belongs to the G-protein coupled receptor 1 family. In terms of tissue distribution, reproductive system.

The protein resides in the cell membrane. This is one of the several different receptors for 5-hydroxytryptamine (serotonin). 5-HT plays important roles in various behavioral and physiological processes in aplysia. These include feeding, locomotion, circadian rhythm, learning and memory, synaptic plasticity, and synaptic growth. This receptor is mediated by G proteins that stimulate phospholipase C. This chain is 5-hydroxytryptamine receptor 1 (5HTB1), found in Aplysia californica (California sea hare).